Here is a 93-residue protein sequence, read N- to C-terminus: Small ribosomal subunit protein uS19c (93 aa).

This sequence belongs to the universal ribosomal protein uS19 family.

It localises to the plastid. The protein localises to the chloroplast. In terms of biological role, protein S19 forms a complex with S13 that binds strongly to the 16S ribosomal RNA. This chain is Small ribosomal subunit protein uS19c, found in Brachypodium distachyon (Purple false brome).